Reading from the N-terminus, the 529-residue chain is PTS system alpha-glucoside-specific EIICB component (529 aa).

In terms of domain architecture, PTS EIIC type-1 spans 1–416; sequence MMKKVQRFGG…MDLKTPGRED (416 aa). Transmembrane regions (helical) follow at residues 8 to 28, 59 to 79, 91 to 111, 130 to 150, 170 to 190, 198 to 218, 222 to 242, 272 to 292, 304 to 324, 328 to 348, 352 to 372, and 380 to 400; these read FGGAMMAPVLLFAFTGIVVGL, GWTVFRQMPILFAIGLPISLA, FALYTTFNYFVAAILKVFYGI, VPTLDTNLFGGILIAALVVYL, VFVYIVGFVVMIPCAFLTVLI, ISALQGFMKASGIFGVWIYTF, ILIPTGLHHFVYTPFVFGPAA, GGFALHGNSKIFGAPGIALAM, VAALLIPIIFTAVISGITEPL, FLFIAPVLFAVHACLAATMAA, AFGVVGNMGGGLLDFFFLNWI, and GTVIAQIVIGLIFTAIYFVVF. One can recognise a PTS EIIB type-1 domain in the interval 450-529; the sequence is AQKGAIILEA…ERIEEMMKKG (80 aa). Cys-472 serves as the catalytic Phosphocysteine intermediate; for EIIB activity.

The protein resides in the cell membrane. Its function is as follows. The phosphoenolpyruvate-dependent sugar phosphotransferase system (sugar PTS), a major carbohydrate active -transport system, catalyzes the phosphorylation of incoming sugar substrates concomitantly with their translocation across the cell membrane. This system is probably involved in transport of the alpha-glucosides trehalulose, turanose, maltulose and palatinose. The polypeptide is PTS system alpha-glucoside-specific EIICB component (Leptotrichia buccalis (strain ATCC 14201 / DSM 1135 / JCM 12969 / NCTC 10249 / C-1013-b)).